We begin with the raw amino-acid sequence, 73 residues long: Large ribosomal subunit protein bL28 (73 aa).

This sequence belongs to the bacterial ribosomal protein bL28 family.

This is Large ribosomal subunit protein bL28 from Anaeromyxobacter dehalogenans (strain 2CP-1 / ATCC BAA-258).